The chain runs to 313 residues: Probable F-box protein At3g44130 (313 aa).

The 46-residue stretch at 1–46 (MASGNLPWELEEEILCRLPLGSLVRLRSVCKHWNDFFNDKWFIKKS) folds into the F-box domain.

This is Probable F-box protein At3g44130 from Arabidopsis thaliana (Mouse-ear cress).